The primary structure comprises 125 residues: Succinate dehydrogenase assembly factor 3, mitochondrial (125 aa).

Residues M1–L30 constitute a mitochondrion transit peptide.

Belongs to the complex I LYR family. SDHAF3 subfamily. In terms of assembly, interacts with SDHB within an SDHA-SDHB subcomplex.

It is found in the mitochondrion matrix. Its function is as follows. Plays an essential role in the assembly of succinate dehydrogenase (SDH), an enzyme complex (also referred to as respiratory complex II) that is a component of both the tricarboxylic acid (TCA) cycle and the mitochondrial electron transport chain, and which couples the oxidation of succinate to fumarate with the reduction of ubiquinone (coenzyme Q) to ubiquinol. Promotes maturation of the iron-sulfur protein subunit SDHB of the SDH catalytic dimer, protecting it from the deleterious effects of oxidants. May act together with SDHAF1. The sequence is that of Succinate dehydrogenase assembly factor 3, mitochondrial from Homo sapiens (Human).